A 291-amino-acid chain; its full sequence is 33 kDa chaperonin (291 aa).

Intrachain disulfides connect cysteine 237-cysteine 239 and cysteine 270-cysteine 273.

The protein belongs to the HSP33 family. Under oxidizing conditions two disulfide bonds are formed involving the reactive cysteines. Under reducing conditions zinc is bound to the reactive cysteines and the protein is inactive.

It localises to the cytoplasm. Its function is as follows. Redox regulated molecular chaperone. Protects both thermally unfolding and oxidatively damaged proteins from irreversible aggregation. Plays an important role in the bacterial defense system toward oxidative stress. The polypeptide is 33 kDa chaperonin (Clostridioides difficile (strain 630) (Peptoclostridium difficile)).